The primary structure comprises 619 residues: Protein DFG16 (619 aa).

Position 1 (Met-1) is a topological domain, extracellular. Residues 2–22 (IIRLHFYYLLTLVYHLGLVGA) traverse the membrane as a helical segment. At 23–167 (YEKAARKRIQ…KDPFPLGMIM (145 aa)) the chain is on the cytoplasmic side. The segment at 33–54 (PPDLIPGPPGHKLGDERPPHYD) is disordered. Basic and acidic residues predominate over residues 44 to 54 (KLGDERPPHYD). A helical membrane pass occupies residues 168-188 (ITFASGCICVATWMLFLVVLL). The Extracellular segment spans residues 189–203 (LPSDNHNRRNKVVHV). A helical transmembrane segment spans residues 204-224 (YVLFSAIIRTVFLNETIAVIF). The Cytoplasmic segment spans residues 225–291 (DSQYHDDYQD…IPFKMKKGTH (67 aa)). Residues 292–312 (IIITVGCFLSLADNILFANLL) traverse the membrane as a helical segment. Over 313 to 321 (WRKNLVVLK) the chain is Extracellular. Residues 322 to 342 (VFYKLIELLIYTIFISIICYF) traverse the membrane as a helical segment. Residues 343–378 (TWHNFAYILLPKTAEINTDGKCKTKLRILWENYHET) are Cytoplasmic-facing. Residues 379–399 (IPLLAYNILIFILFYFTTIFF) form a helical membrane-spanning segment. At 400–410 (AAFTKHVRGWT) the chain is on the extracellular side. The helical transmembrane segment at 411–431 (FNFVHLLKVLITVNVWGLIGV) threads the bilayer. The Cytoplasmic segment spans residues 432 to 619 (LEKRELHISK…NHIYNYENSD (188 aa)). Polar residues-rich tracts occupy residues 485–504 (KSNT…SPTW) and 526–549 (KFGQ…TLSK). 2 disordered regions span residues 485–506 (KSNT…TWKS) and 520–586 (IMKS…ADKH). The span at 552 to 561 (QLLRKPRRKT) shows a compositional bias: basic residues.

The protein resides in the membrane. Functionally, involved in invasion during filamentous growth. This is Protein DFG16 (DFG16) from Saccharomyces cerevisiae (strain ATCC 204508 / S288c) (Baker's yeast).